The sequence spans 249 residues: Aspartate/glutamate leucyltransferase (249 aa).

The protein belongs to the R-transferase family. Bpt subfamily.

It localises to the cytoplasm. It catalyses the reaction N-terminal L-glutamyl-[protein] + L-leucyl-tRNA(Leu) = N-terminal L-leucyl-L-glutamyl-[protein] + tRNA(Leu) + H(+). The enzyme catalyses N-terminal L-aspartyl-[protein] + L-leucyl-tRNA(Leu) = N-terminal L-leucyl-L-aspartyl-[protein] + tRNA(Leu) + H(+). Functionally, functions in the N-end rule pathway of protein degradation where it conjugates Leu from its aminoacyl-tRNA to the N-termini of proteins containing an N-terminal aspartate or glutamate. The polypeptide is Aspartate/glutamate leucyltransferase (Brucella melitensis biotype 2 (strain ATCC 23457)).